The primary structure comprises 4558 residues: Multifunctional-autoprocessing repeats-in-toxin (4558 aa).

The first 32 residues, 1–32 (MVFYLIPKRRVWLMGKPFWRSVEYFFTGNYSA), serve as a signal peptide directing secretion. RtxA repeat units follow at residues 114–131 (GAAG…GDVS), 134–151 (GAAA…GNVT), 154–170 (GAGG…QGNL), 174–197 (GAGA…GDVT), 200–217 (GAGA…GNIT), 220–237 (GAGA…GDIT), 268–285 (GVGG…GDIH), 288–304 (GGGA…GNDF), 594–611 (GAGG…GNVH), 614–630 (GGGI…FGNT), 634–651 (GGGA…GDLT), 654–668 (GAGL…SEQG), 751–763 (AGGA…MGEG), 769–781 (MLGG…HISN), 792–808 (ALGG…GNTL), 811–826 (MGGG…DGTT), 830–845 (MVGG…NGDT), 851–865 (GVGN…GQTL), 868–885 (MGAA…TSIA), 887–901 (MIGA…GEGN), 906–920 (MGGL…GNGD), 925–942 (MVAE…MSVA), 944–960 (MLAK…GTTL), 982–994 (MIGQ…KVGN), 1001–1016 (MVGK…DGTS), 1041–1053 (GKAN…GDGL), 1077–1089 (AAAK…HVGD), 1097–1112 (AGKG…GTTV), 1120–1132 (GNVM…GTTI), 1135–1152 (AKGK…LGVN), 1155–1169 (WGQA…DGDR), 1173–1189 (AKGE…GQEV), 1194–1209 (GEAN…DDYT), 1211–1227 (AWGK…GQNV), 1230–1246 (AKGE…GDSF), 1252–1266 (KGNI…MQVT), 1268–1285 (AKGQ…LNVT), 1306–1323 (AWGK…LNVA), and 1325–1342 (MKGK…LNIN). Disordered stretches follow at residues 1623–1688 (HATQ…KEES), 1752–1779 (TLSD…QNRA), and 1791–1890 (DAEK…NADG). Residues 1625–1634 (TQNPAAQNAL) are compositionally biased toward polar residues. Basic and acidic residues predominate over residues 1635–1654 (SDKERAEADRQRLEQEKQKQ). Polar residues predominate over residues 1660 to 1679 (GSQSQLESTDQQALENNGQA). The span at 1791-1815 (DAEKRKADALAKGKDAQQAESDAHH) shows a compositional bias: basic and acidic residues. A compositionally biased stretch (polar residues) spans 1879-1888 (HVNTDSQTNA). The ACD domain maps to 1988–2422 (VPGFKSHFAS…HAEQWAKITA (435 aa)). Position 1999–2003 (1999–2003 (SIGIE)) interacts with ATP. Residues Glu-2003, Glu-2065, and Gln-2149 each contribute to the Mg(2+) site. Residue Arg-2255 participates in ATP binding. Residue Glu-2326 coordinates Mg(2+). The interval 2574–2658 (ELMSVTELLD…SLLNQVNTRL (85 aa)) is membrane localization region (MLD). The rho inactivation domain (RID) stretch occupies residues 2734-3098 (EYGQTVADTI…HQVTDVLDAL (365 aa)). The ABH effector region stretch occupies residues 3195-3310 (VVLFLHGSGS…MPSMTKAITA (116 aa)). Residues 3404–3426 (ASVDEDLDQQGLDTTSTKDQGIS) are disordered. A compositionally biased stretch (polar residues) spans 3414–3426 (GLDTTSTKDQGIS). Residues 3462 to 3646 (PTTDGGETRF…AENNKVSLSW (185 aa)) enclose the Peptidase C80 domain. 1D-myo-inositol hexakisphosphate-binding positions include 3468 to 3470 (ETR), 3495 to 3496 (KH), and Arg-3526. His-3532 functions as the For cysteine protease activity in the catalytic mechanism. Ser-3577 contributes to the 1D-myo-inositol hexakisphosphate binding site. The Nucleophile; for cysteine protease activity role is filled by Cys-3581. 1D-myo-inositol hexakisphosphate-binding positions include 3610–3612 (SVR), 3623–3624 (RK), Lys-3636, and Lys-3641.

Mg(2+) serves as cofactor.

Its subcellular location is the secreted. The protein localises to the host cytoplasm. The protein resides in the host cytosol. It localises to the host cell membrane. It catalyses the reaction L-lysyl-/S-(2E,6E,10E)-geranylgeranyl-L-cysteinyl-[protein] + hexadecanoyl-CoA = N(6)-hexadecanoyl-L-lysyl-/S-(2E,6E,10E)-geranylgeranyl-L-cysteinyl-[protein] + CoA + H(+). The catalysed reaction is L-lysyl-/S-(2E,6E,10E)-geranylgeranyl-L-cysteinyl-[protein] + dodecanoyl-CoA = N(6)-dodecanoyl-L-lysyl-/S-(2E,6E,10E)-geranylgeranyl-L-cysteinyl-[protein] + CoA + H(+). It carries out the reaction L-lysyl-/S-(2E,6E,10E)-geranylgeranyl-L-cysteinyl-[protein] + decanoyl-CoA = N(6)-decanoyl-L-lysyl-/S-(2E,6E,10E)-geranylgeranyl-L-cysteinyl-[protein] + CoA + H(+). Protease activity is inhibited by N-ethylmaleimide but not other protease inhibitors. Protease activity is inhibited by aza-leucine epoxide. Protease activity is activated upon binding inositol hexakisphosphate (InsP6) via an allosteric mechanism: the active site is disordered or occluded in the absence of InsP6, protecting the protease active-site sulfhydryl until the toxin enters a eukaryotic cell. Upon processing at the Leu-3441-Ala-3442 site, the peptidase C80 domain is converted to a form with much reduced affinity for InsP6, but is reactivated for high affinity binding of InsP6 by cooperative binding of both a new substrate and InsP6. Reactivation allows cleavage at other sites, specifically at Leu residues between the effector domains. In terms of biological role, precursor of a multifunctional toxin that causes destruction of the actin cytoskeleton by covalent cross-linking of actin and inactivation of Rho GTPases when translocated into the host cytoplasm. Upon translocation into the host cell, undergoes autoprocessing in cis mediated by the peptidase C80 domain (also named CPD domain): the protease activity is activated upon binding inositol hexakisphosphate (InsP6) present at the host cell membrane and delivers the Cysteine protease domain-containing toxin F3 chain to the host cytosol. The Cysteine protease domain-containing toxin F3 chain will then further cleave and release effector toxin chains that cause disassembly of the actin cytoskeleton and enhance V.cholerae colonization of the small intestine, possibly by facilitating evasion of phagocytic cells. Its function is as follows. Following autocatalytic cleavage in cis at the Leu-3441-Ala-3442 site, this chain mediates processing in trans to release other individual toxin chains to the host cytosol. Released effector toxin chains cause disassembly of the actin cytoskeleton and enhance V.cholerae colonization of the small intestine, possibly by facilitating evasion of phagocytic cells. Actin-directed toxin that catalyzes the covalent cross-linking of host cytoplasmic monomeric actin. Mediates the cross-link between 'Lys-50' of one monomer and 'Glu-270' of another actin monomer, resulting in formation of highly toxic actin oligomers that cause cell rounding. The toxin can be highly efficient at very low concentrations by acting on formin homology family proteins: toxic actin oligomers bind with high affinity to formins and adversely affect both nucleation and elongation abilities of formins, causing their potent inhibition in both profilin-dependent and independent manners. Acts as an acid--amino-acid ligase that transfers the gamma-phosphoryl group of ATP to the 'Glu-270' actin residue, resulting in the formation of an activated acyl phosphate intermediate. This intermediate is further hydrolyzed and the energy of hydrolysis is utilized for the formation of the amide bond between actin subunits. Functionally, N-epsilon-fatty acyltransferase that mediates lysine-palmitoylation of host Rho GTPase proteins, with a strong preference for host Rac1. After delivery to the host cytosol, localizes to the host cell membrane where it palmitoylates host Rho GTPase proteins, resulting in loss of all active GTP-bound Rho and subsequent actin depolymerization. Prenylation of host Rac1 at the C-terminus is required for lysine-palmitoylation. In terms of biological role, indirectly activates the small GTPase CDC42. The sequence is that of Multifunctional-autoprocessing repeats-in-toxin from Vibrio cholerae serotype O1 (strain ATCC 39315 / El Tor Inaba N16961).